Consider the following 295-residue polypeptide: Cyclin-G1 (295 aa).

The protein belongs to the cyclin family. Cyclin G subfamily.

The protein localises to the nucleus. May play a role in growth regulation. Is associated with G2/M phase arrest in response to DNA damage. May be an intermediate by which p53 mediates its role as an inhibitor of cellular proliferation. This chain is Cyclin-G1 (CCNG1), found in Sus scrofa (Pig).